A 209-amino-acid chain; its full sequence is uncharacterized protein (209 aa).

The N-terminal stretch at 1-17 (MKRLVTGLLALSLFLAA) is a signal peptide. Residues 17-105 (ACGQDSDQQK…SNNQANNNQK (89 aa)) are disordered. A lipid anchor (N-palmitoyl cysteine) is attached at C18. C18 is lipidated: S-diacylglycerol cysteine. Over residues 23–70 (DQQKDGNKEKDDKAKTEQQDKKTNDSSKDKKDNKDDSKDVNKDNKDNS) the composition is skewed to basic and acidic residues. Residues 71–105 (ANDNQQQSNSNATNNDQNQTNNNQSSNNQANNNQK) are compositionally biased toward low complexity.

It localises to the cell membrane. This is an uncharacterized protein from Staphylococcus aureus (strain COL).